The following is a 456-amino-acid chain: ATP synthase subunit beta 1 (456 aa).

ATP is bound at residue 152 to 159 (GGAGVGKS).

The protein belongs to the ATPase alpha/beta chains family. As to quaternary structure, F-type ATPases have 2 components, CF(1) - the catalytic core - and CF(0) - the membrane proton channel. CF(1) has five subunits: alpha(3), beta(3), gamma(1), delta(1), epsilon(1). CF(0) has three main subunits: a(1), b(2) and c(9-12). The alpha and beta chains form an alternating ring which encloses part of the gamma chain. CF(1) is attached to CF(0) by a central stalk formed by the gamma and epsilon chains, while a peripheral stalk is formed by the delta and b chains.

It localises to the cell membrane. It catalyses the reaction ATP + H2O + 4 H(+)(in) = ADP + phosphate + 5 H(+)(out). Functionally, produces ATP from ADP in the presence of a proton gradient across the membrane. The catalytic sites are hosted primarily by the beta subunits. This is ATP synthase subunit beta 1 from Listeria monocytogenes serovar 1/2a (strain ATCC BAA-679 / EGD-e).